The following is a 184-amino-acid chain: Deoxyuridine 5'-triphosphate nucleotidohydrolase (184 aa).

Over residues 1 to 16 (MPHTQTDAHQNNQENF) the composition is skewed to polar residues. Positions 1 to 25 (MPHTQTDAHQNNQENFSSSLISSRP) are disordered. Substrate is bound by residues 96–98 (RSG), asparagine 109, 113–115 (TID), and lysine 123. The disordered stretch occupies residues 165–184 (STKNTVGNRGAGGFGSTGHD). Over residues 173-184 (RGAGGFGSTGHD) the composition is skewed to gly residues.

The protein belongs to the dUTPase family. Requires Mg(2+) as cofactor.

The catalysed reaction is dUTP + H2O = dUMP + diphosphate + H(+). The protein operates within pyrimidine metabolism; dUMP biosynthesis; dUMP from dCTP (dUTP route): step 2/2. This enzyme is involved in nucleotide metabolism: it produces dUMP, the immediate precursor of thymidine nucleotides and it decreases the intracellular concentration of dUTP so that uracil cannot be incorporated into DNA. This is Deoxyuridine 5'-triphosphate nucleotidohydrolase from Bartonella henselae (strain ATCC 49882 / DSM 28221 / CCUG 30454 / Houston 1) (Rochalimaea henselae).